The sequence spans 324 residues: Glyoxylate/hydroxypyruvate reductase B (324 aa).

Active-site residues include Arg-237 and Glu-266. His-285 acts as the Proton donor in catalysis.

Belongs to the D-isomer specific 2-hydroxyacid dehydrogenase family. GhrB subfamily. As to quaternary structure, homodimer.

Its subcellular location is the cytoplasm. The enzyme catalyses glycolate + NADP(+) = glyoxylate + NADPH + H(+). It carries out the reaction (R)-glycerate + NAD(+) = 3-hydroxypyruvate + NADH + H(+). The catalysed reaction is (R)-glycerate + NADP(+) = 3-hydroxypyruvate + NADPH + H(+). Functionally, catalyzes the NADPH-dependent reduction of glyoxylate and hydroxypyruvate into glycolate and glycerate, respectively. The sequence is that of Glyoxylate/hydroxypyruvate reductase B from Escherichia coli (strain ATCC 8739 / DSM 1576 / NBRC 3972 / NCIMB 8545 / WDCM 00012 / Crooks).